The sequence spans 113 residues: MSQEIYDYANQLERAVRALPEYQKVLEVKEAIQADASTSQLFDEFVAMQEKIQGMMQSGQMPTAEEQTSIQELSQKIEANDQLKAYFEAQQALSVYMSDIERIVFAPLKDLVK.

It belongs to the UPF0342 family.

This chain is UPF0342 protein SpyM3_0545, found in Streptococcus pyogenes serotype M3 (strain ATCC BAA-595 / MGAS315).